Here is a 200-residue protein sequence, read N- to C-terminus: Protein OPI10 homolog (200 aa).

Belongs to the OPI10 family.

It is found in the cytoplasm. Its subcellular location is the nucleus envelope. This Schizosaccharomyces pombe (strain 972 / ATCC 24843) (Fission yeast) protein is Protein OPI10 homolog.